The chain runs to 325 residues: Homeobox protein Hox-A1a (325 aa).

The Antp-type hexapeptide motif lies at 187-192; that stretch reads TFDWMK. 2 disordered regions span residues 194-215 and 264-325; these read KRNPPKTGRSGEYGYGGQPNTV and RMKQ…YPSN. A DNA-binding region (homeobox) is located at residues 212 to 271; sequence PNTVRTNFTTKQLTELEKEFHFNKYLTRARRVEIAAALQLNETQVKIWFQNRRMKQKKRE. Residues 285 to 300 are compositionally biased toward basic and acidic residues; that stretch reads SGERNQEKVEDGESEK. Positions 301–317 are enriched in low complexity; the sequence is SVSAPSTPSPTSSTVSS.

The protein belongs to the Antp homeobox family. Labial subfamily.

The protein localises to the nucleus. Sequence-specific transcription factor which is part of a developmental regulatory system that provides cells with specific positional identities on the anterior-posterior axis. This is Homeobox protein Hox-A1a (hoxa1a) from Takifugu rubripes (Japanese pufferfish).